The primary structure comprises 313 residues: Uracil-DNA glycosylase (313 aa).

Polar residues predominate over residues 1–12 (MIGQKTLYSFFS). The interaction with FAM72A stretch occupies residues 1-25 (MIGQKTLYSFFSPSPARKRHAPSPE). The tract at residues 1–29 (MIGQKTLYSFFSPSPARKRHAPSPEPAVQ) is mitochondrial localization signal. Positions 1–68 (MIGQKTLYSF…GTPPSSPLSA (68 aa)) are disordered. Ser12 and Ser14 each carry phosphoserine. The Important for nuclear sorting motif lies at 17–19 (RKR). Ser23 carries the post-translational modification Phosphoserine. Positions 43–53 (AAAIPAKKAPA) are enriched in low complexity. Thr60 is subject to Phosphothreonine. Ser64 bears the Phosphoserine mark. Positions 73-88 (RIQRNKAAALLRLAAR) are interaction with RPA2. Gln153 is a uracil binding site. The active-site Proton acceptor is Asp154. His157 provides a ligand contact to dsDNA. Phe167 is a binding site for uracil. Ser178 serves as a coordination point for dsDNA. Asn213 contacts uracil. Ser256, His277, Ser279, Ser282, and Arg285 together coordinate dsDNA. His277 lines the uracil pocket. The residue at position 295 (Lys295) is an N6-acetyllysine.

It belongs to the uracil-DNA glycosylase (UDG) superfamily. UNG family. In terms of assembly, monomer. Interacts with RPA2 subunit of the RPA trimer; this interaction mediates UNG2 recruitment to RPA-coated single-stranded DNA at stalled replication forks. Interacts with PCNA; this interaction mediates UNG2 recruitment to S-phase replication foci. Interacts (via N-terminus) with FAM72A. As to quaternary structure, (Microbial infection) Interacts with HIV-1 Vpr. Post-translationally, processed by mitochondrial serine or cysteine peptidases to yield a mature dominant form that lacks N-terminal 29 amino acid residues and another minor form that lacks N-terminal 77 amino acid residues. The catalytic activity of UNG1 delta29 is not product-inhibited by AP sites.

Its subcellular location is the mitochondrion. The protein localises to the nucleus. The enzyme catalyses Hydrolyzes single-stranded DNA or mismatched double-stranded DNA and polynucleotides, releasing free uracil.. It catalyses the reaction a 2'-deoxyuridine in single-stranded DNA + H2O = a 2'-deoxyribose 5'-monophosphate in single-stranded DNA + uracil. The catalysed reaction is a 2'-deoxyuridine in double-stranded DNA + H2O = a 2'-deoxyribose 5'-monophosphate in double-stranded DNA + uracil. Its function is as follows. Uracil-DNA glycosylase that hydrolyzes the N-glycosidic bond between uracil and deoxyribose in single- and double-stranded DNA (ssDNA and dsDNA) to release a free uracil residue and form an abasic (apurinic/apyrimidinic; AP) site. Excises uracil residues arising as a result of misincorporation of dUMP residues by DNA polymerase during replication or due to spontaneous or enzymatic deamination of cytosine. Mediates error-free base excision repair (BER) of uracil at replication forks. According to the model, it is recruited by PCNA to S-phase replication forks to remove misincorporated uracil at U:A base mispairs in nascent DNA strands. Via trimeric RPA it is recruited to ssDNA stretches ahead of the polymerase to allow detection and excision of deaminated cytosines prior to replication. The resultant AP sites temporarily stall replication, allowing time to repair the lesion. Mediates mutagenic uracil processing involved in antibody affinity maturation. Processes AICDA-induced U:G base mispairs at variable immunoglobulin (Ig) regions leading to the generation of transversion mutations. Operates at switch sites of Ig constant regions where it mediates Ig isotype class switch recombination. Excises AICDA-induced uracil residues forming AP sites that are subsequently nicked by APEX1 endonuclease. The accumulation of staggered nicks in opposite strands results in double strand DNA breaks that are finally resolved via non-homologous end joining repair pathway. The chain is Uracil-DNA glycosylase from Homo sapiens (Human).